We begin with the raw amino-acid sequence, 559 residues long: Extracellular matrix protein 1 (559 aa).

The signal sequence occupies residues 1-19 (MGTVSRAALILACLALASA). A run of 2 repeats spans residues 170-298 (HCQQ…RPDY) and 302-424 (PCPV…YPNY). The 2 X approximate repeats stretch occupies residues 170–424 (HCQQGRRGVW…FAHLAPYPNY (255 aa)). N-linked (GlcNAc...) asparagine glycosylation is present at Asn-373. Residues Asn-463 and Asn-535 are each glycosylated (N-linked (GlcNAc...) (high mannose) asparagine). The tract at residues 535–559 (NATGLGEQGPTRGTDANPAPGSKEE) is disordered. Ser-556 is subject to Phosphoserine.

As to quaternary structure, interacts (via C-terminus) with HSPG2 (via C-terminus). Interacts with EFEMP1/FBLN3 and LAMB3. Interacts with MMP9. As to expression, expressed in the surrounding connective tissues of developing long bones, but not in the cartilage. The long isoform is expressed in a number of tissues including liver, heart and lungs. The short isoform is expressed in skin and cartilage-containing tissues such as tail and front paw. No expression is found in brain.

It localises to the secreted. The protein resides in the extracellular space. Its subcellular location is the extracellular matrix. Functionally, involved in endochondral bone formation as negative regulator of bone mineralization. Stimulates the proliferation of endothelial cells and promotes angiogenesis. Inhibits MMP9 proteolytic activity. This Mus musculus (Mouse) protein is Extracellular matrix protein 1 (Ecm1).